Reading from the N-terminus, the 52-residue chain is MVKCFDFFLSLNFGKMTKLLVWRTDKPQDDMPQTPNSQVTIVSRDHPRGGNY.

The disordered stretch occupies residues 25 to 52; the sequence is DKPQDDMPQTPNSQVTIVSRDHPRGGNY. Over residues 31–41 the composition is skewed to polar residues; the sequence is MPQTPNSQVTI. Residues 43-52 are compositionally biased toward basic and acidic residues; it reads SRDHPRGGNY.

Expressed in roots. Barely detected in flowers.

Functionally, produces a rapid alkalinization of the cellular media and the induction of defense-related genes, including chitinase 1b, chalcone synthase and CYP93A1. Not active in tobacco or Arabidopsis. The receptor for GmPep914 is probably different from the receptor for GmSubPep. This Glycine max (Soybean) protein is Protein PROPEP914 (PROPEP914).